A 363-amino-acid polypeptide reads, in one-letter code: Proline/serine-rich coiled-coil protein 1 (363 aa).

Ser22 is subject to Phosphoserine. Repeat 1 spans residues 38–41 (PEKP). The disordered stretch occupies residues 39-67 (EKPLRRGLSHRSDPNAVAPAPQGVRLSLG). A Phosphoserine modification is found at Leu42. Gly45 carries the post-translational modification Phosphothreonine. Residues Ser47, Ser65, Ser70, Ser98, Ser122, and Ser140 each carry the phosphoserine modification. The stretch at 68–71 (PLSP) is repeat 2. Positions 70-94 (SPEKLEEILDEANRLAAQLEQCALQ) form a coiled coil. The interval 95–363 (DRESAGEGLG…RKVAVPGPTR (269 aa)) is disordered. Positions 103-246 (LGPRRVKPSP…HPSPPGPPTP (144 aa)) are 4 X 4 AA repeats of P-X-X-P. Basic and acidic residues predominate over residues 112–124 (PRRETFVLKDSPV). Positions 133–148 (SLTRSTPSPSSLTPRL) are enriched in low complexity. Thr145 carries the phosphothreonine modification. Phosphoserine is present on residues Ser186 and Ser190. Residues 186–196 (SPASSPLTRST) are compositionally biased toward polar residues. Positions 197 to 210 (PPVRGRAGPSGRAA) are enriched in low complexity. Ser212 is subject to Phosphoserine. Residue Thr215 is modified to Phosphothreonine. Tandem repeats lie at residues 238 to 241 (PSPP) and 243 to 246 (PPTP).

It belongs to the PSRC1 family. As to quaternary structure, interacts with APC2. Interacts with KIF2A. Interacts with ANKRD53; recruits ANKRD53 to the spindle during mitosis. In terms of processing, phosphorylated during mitosis. As to expression, widely expressed in adult and fetal tissues, with highest expression in the adult brain and fetal thymus. Not detected in adult skeletal muscle.

The protein localises to the cytoplasm. It is found in the cytoskeleton. The protein resides in the spindle. Its subcellular location is the spindle pole. Required for normal progression through mitosis. Required for normal congress of chromosomes at the metaphase plate, and for normal rate of chromosomal segregation during anaphase. Plays a role in the regulation of mitotic spindle dynamics. Increases the rate of turnover of microtubules on metaphase spindles, and contributes to the generation of normal tension across sister kinetochores. Recruits KIF2A and ANKRD53 to the mitotic spindle and spindle poles. May participate in p53/TP53-regulated growth suppression. The sequence is that of Proline/serine-rich coiled-coil protein 1 (PSRC1) from Homo sapiens (Human).